The following is a 262-amino-acid chain: Short-chain Z-isoprenyl diphosphate synthase (262 aa).

The active site involves Asp40. Asp40 serves as a coordination point for Mg(2+). Substrate is bound by residues 41 to 44, Trp45, and 86 to 88; these read GNRR and STE. The active-site Proton acceptor is the Asn89. Residues Arg92, Arg211, and 217-219 contribute to the substrate site; that span reads RLS. Glu230 contributes to the Mg(2+) binding site.

This sequence belongs to the UPP synthase family. Z-FPP synthase subfamily. Mg(2+) is required as a cofactor.

The catalysed reaction is isopentenyl diphosphate + (2E)-geranyl diphosphate = (2Z,6E)-farnesyl diphosphate + diphosphate. The protein operates within phospholipid metabolism; decaprenyl phosphate biosynthesis. Functionally, generates Z-farnesyl diphosphate (Z-FPP) from isopentenyl pyrophosphate (IPP). Z-FPP is the precursor of decaprenyl diphosphate, which has a central role in the biosynthesis of the mycobacterial cell wall. This is Short-chain Z-isoprenyl diphosphate synthase from Mycobacterium bovis (strain ATCC BAA-935 / AF2122/97).